Here is a 415-residue protein sequence, read N- to C-terminus: Putative competence-damage inducible protein (415 aa).

The protein belongs to the CinA family.

The sequence is that of Putative competence-damage inducible protein from Limosilactobacillus reuteri (strain DSM 20016) (Lactobacillus reuteri).